The primary structure comprises 311 residues: Mitochondrial arginine transporter BAC1 (311 aa).

Solcar repeat units follow at residues 12-101 (FGFY…AKLF), 111-203 (PRPE…LRYH), and 219-305 (VDMG…SMKM). Helical transmembrane passes span 18-38 (YVAGMMAGLATVAVGHPFDTV), 76-96 (GATSSFMGMAFESSLMFGIYS), 113-133 (PEIIVPSAMFGGAIISFVLCP), 178-197 (GGSATLLRECTGNAVFFTVY), 222-242 (GIGVLTGGLGGIACWSAVLPF), and 288-308 (AFPANAAAIVAWEFSMKMLGI).

This sequence belongs to the mitochondrial carrier (TC 2.A.29) family. As to expression, high expression in flowers and siliques. Lower expression in leaves and stems.

Its subcellular location is the mitochondrion inner membrane. With respect to regulation, inhibited by mercuric chloride. Functionally, mitochondrial arginine transporter that catalyzes the counter-exchange of arginine with lysine, ornithine, arginine and histidine. Substrate preference in reconstituted proteoliposomes is arginine &gt; lysine &gt; ornithine &gt; histidine. May be involved in the delivery of arginine, released from seed reserves, to mitochondrial arginase and the export of ornithine. This is Mitochondrial arginine transporter BAC1 (BAC1) from Arabidopsis thaliana (Mouse-ear cress).